Consider the following 172-residue polypeptide: Large ribosomal subunit protein uL10 (172 aa).

This sequence belongs to the universal ribosomal protein uL10 family. In terms of assembly, part of the ribosomal stalk of the 50S ribosomal subunit. The N-terminus interacts with L11 and the large rRNA to form the base of the stalk. The C-terminus forms an elongated spine to which L12 dimers bind in a sequential fashion forming a multimeric L10(L12)X complex.

Its function is as follows. Forms part of the ribosomal stalk, playing a central role in the interaction of the ribosome with GTP-bound translation factors. This is Large ribosomal subunit protein uL10 from Prosthecochloris aestuarii (strain DSM 271 / SK 413).